The sequence spans 269 residues: JmjC domain-containing protein 8 (269 aa).

Residues 1-24 (MAAAGRFGLLLLIVLWTMVTVVLP) form the signal peptide. Residues N135, N145, and N214 are each glycosylated (N-linked (GlcNAc...) asparagine). In terms of domain architecture, JmjC spans 147 to 269 (TEWAPLFQHY…TSVFISTFLG (123 aa)).

As to quaternary structure, oligomer. Dimer. Interacts with PKM; regulates angiogenesis and metabolism. N-glycosylated.

It localises to the endoplasmic reticulum lumen. The protein resides in the cytoplasm. Functionally, functions as a positive regulator of TNF-induced NF-kappaB signaling. Regulates angiogenesis and cellular metabolism through interaction with PKM. The polypeptide is JmjC domain-containing protein 8 (Rattus norvegicus (Rat)).